The chain runs to 658 residues: Glycine--tRNA ligase beta subunit (658 aa).

Belongs to the class-II aminoacyl-tRNA synthetase family. In terms of assembly, tetramer of two alpha and two beta subunits.

The protein resides in the cytoplasm. The enzyme catalyses tRNA(Gly) + glycine + ATP = glycyl-tRNA(Gly) + AMP + diphosphate. In Rickettsia bellii (strain OSU 85-389), this protein is Glycine--tRNA ligase beta subunit.